Here is a 317-residue protein sequence, read N- to C-terminus: DNA-directed RNA polymerase subunit alpha (317 aa).

The interval 1 to 234 is alpha N-terminal domain (alpha-NTD); that stretch reads MKQFVRPEFI…AHLEFFIDLN (234 aa). The interval 249-317 is alpha C-terminal domain (alpha-CTD); sequence DDKELDRTVE…ASLGLAFRQS (69 aa).

Belongs to the RNA polymerase alpha chain family. Homodimer. The RNAP catalytic core consists of 2 alpha, 1 beta, 1 beta' and 1 omega subunit. When a sigma factor is associated with the core the holoenzyme is formed, which can initiate transcription.

It carries out the reaction RNA(n) + a ribonucleoside 5'-triphosphate = RNA(n+1) + diphosphate. DNA-dependent RNA polymerase catalyzes the transcription of DNA into RNA using the four ribonucleoside triphosphates as substrates. In Mycoplasma capricolum subsp. capricolum (strain California kid / ATCC 27343 / NCTC 10154), this protein is DNA-directed RNA polymerase subunit alpha.